Reading from the N-terminus, the 451-residue chain is AP-3 complex subunit mu (451 aa).

The region spanning Asn-191–Arg-450 is the MHD domain.

The protein belongs to the adaptor complexes medium subunit family. Adaptor protein complex 3 (AP-3) is a heterotetramer composed of 2 large adaptins (APL5 and APL6), a medium adaptin (APM3) and a small adaptin (APS3).

It localises to the golgi apparatus. It is found in the cytoplasmic vesicle membrane. In terms of biological role, part of the AP-3 complex, an adaptor-related complex which is not clathrin-associated. The complex is associated with the Golgi region as well as more peripheral structures. It facilitates the budding of vesicles from the Golgi membrane and may be directly involved in trafficking to the vacuole. The sequence is that of AP-3 complex subunit mu (APM3) from Eremothecium gossypii (strain ATCC 10895 / CBS 109.51 / FGSC 9923 / NRRL Y-1056) (Yeast).